A 118-amino-acid chain; its full sequence is NLVQFGFMIECAIRNRRPALDFMNYGCYCGTVGRGTPVDDLDRCCQVHDECYATAEKHGCYPSLTTYQWECRQVGNECNSKTQCEVFVCACDLAAAKCLAQEDYNPAHFNINTGERCK.

Disulfide bonds link Cys11-Cys71, Cys27-Cys117, Cys29-Cys45, Cys44-Cys98, Cys51-Cys91, Cys60-Cys84, and Cys78-Cys89.

This sequence belongs to the phospholipase A2 family. Group I subfamily. D49 sub-subfamily. In terms of assembly, heterotrimer of alpha, beta, and gamma chains; non-covalently linked. As to expression, expressed by the venom gland.

Its subcellular location is the secreted. Heterotrimer: Snake venom phospholipase A2 (PLA2) heterotrimer that acts as a potent presynaptic neurotoxin by blocking synaptic transmission and synaptic vesicle recycling. May act by binding in a calcium-dependent fashion to neurotonal pentraxin-1 (NPTX1) and neurotonal pentraxin-2 (NPTX2), but not to neuronal pentraxin receptor (NPTXR). Also binds to taipoxin-associated calcium binding protein 49 (RCN2), a protein localized in the lumen of endoplasmic reticulum. Its function is as follows. Monomer (beta chain): Snake venom phospholipase A2 homolog that is neither toxic nor enzymatically active. Does not bind calcium. This chain is Neutral phospholipase A2 homolog taipoxin beta chain 2, found in Oxyuranus scutellatus scutellatus (Australian taipan).